The primary structure comprises 464 residues: Multifunctional dye peroxidase DyP2 (464 aa).

Asp203 serves as the catalytic Proton acceptor. Residues Glu258, Glu273, and Glu284 each contribute to the Mn(2+) site. Heme is bound at residue His321.

Belongs to the DyP-type peroxidase family. In terms of assembly, exists both as a monomeric and oligomeric species in solution; the monomeric form contains no bound heme cofactor and is inactive. Requires heme b as cofactor. It depends on Mn(2+) as a cofactor.

Its subcellular location is the secreted. It catalyses the reaction 1-(4-hydroxy-3-methoxyphenyl)-2-(2-methoxyphenoxy)propane-1,3-diol + H2O2 = guaiacol + vanillin + glycolaldehyde + H2O. It carries out the reaction 2 Mn(2+) + H2O2 + 2 H(+) = 2 Mn(3+) + 2 H2O. The catalysed reaction is 2 a phenolic donor + H2O2 = 2 a phenolic radical donor + 2 H2O. The enzyme catalyses Reactive Blue 5 + 2 H2O2 = 2,2'-disulfonyl azobenzene + 3-[(4-amino-6-chloro-1,3,5-triazin-2-yl)amino]benzenesulfonate + phthalate + 2 H2O + 2 H(+). In terms of biological role, displays both high peroxidase and manganese peroxidase activity. Is likely involved in lignin degradation. Also has a Mn-dependent oxidase mode of action that expands its substrate scope in vitro; is thus able to catalyze the O(2)- and Mn-dependent oxidative decarboxylation of 4-methoxymandelate to anisaldehyde. In Amycolatopsis sp. (strain ATCC 39116 / 75iv2), this protein is Multifunctional dye peroxidase DyP2.